The sequence spans 559 residues: MAAEEMQWPVPMKAIGAQNLLTMPGGVAKAGYLHKKGGTQLQLLKWPLRFVIIHKRCIYYFKSSTSASPQGAFSLSGYNRVMRAAEETTSNNVFPFKIIHISKKHRTWFFSASSEDERKSWMAFVRREIGHFHEKKELPLDTSDSSSDTDSFYGAVERPIDISLSSYPMDNEDYEHEDEDDSYLEPDSPGPMKLEDALTYPPAYPPPPVPVPRKPAFSDLPRAHSFTSKSPSPLLPPPPPKRGLPDTGSAPEDAKDALGLRRVEPGLRVPATPRRMSDPPMSNVPTVPNLRKHPCFRDSVNPGLEPWTPGHGTSSVSSSTTMAVATSRNCDKLKSFHLSSRGPPTSEPPPVPANKPKFLKIAEEPSPREAAKFAPVPPVAPRPPVQKMPMPEATVRPAVLPRPENTPLPHLQRSPPDGQSFRGFSFEKARQPSQADTGEEDSDEDYEKVPLPNSVFVNTTESCEVERLFKATDPRGEPQDGLYCIRNSSTKSGKVLVVWDESSNKVRNYRIFEKDSKFYLEGEVLFASVGSMVEHYHTHVLPSHQSLLLRHPYGYAGPR.

Residues 26–130 enclose the PH domain; it reads GVAKAGYLHK…WMAFVRREIG (105 aa). The interval 164–449 is disordered; the sequence is LSSYPMDNED…EDSDEDYEKV (286 aa). A compositionally biased stretch (acidic residues) spans 170-184; it reads DNEDYEHEDEDDSYL. Residues Tyr174 and Tyr183 each carry the phosphotyrosine; by SYK modification. The SH3-binding motif lies at 201-210; the sequence is PPAYPPPPVP. Pro residues-rich tracts occupy residues 202–213 and 233–242; these read PAYPPPPVPVPR and PLLPPPPPKR. Basic and acidic residues predominate over residues 252–265; sequence EDAKDALGLRRVEP. Ser277 bears the Phosphoserine mark. Positions 313–327 are enriched in low complexity; the sequence is TSSVSSSTTMAVATS. A compositionally biased stretch (basic and acidic residues) spans 360–371; the sequence is KIAEEPSPREAA. Residues 375-386 are compositionally biased toward pro residues; that stretch reads PVPPVAPRPPVQ. Phosphoserine occurs at positions 414 and 425. A compositionally biased stretch (acidic residues) spans 437 to 446; that stretch reads TGEEDSDEDY. The residue at position 446 (Tyr446) is a Phosphotyrosine; by SYK. The 99-residue stretch at 455–553 folds into the SH2 domain; sequence VFVNTTESCE…HQSLLLRHPY (99 aa).

In terms of processing, phosphorylated. Phosphorylation at Tyr-446 may stimulate the activity of the LYN kinase.

In terms of biological role, binds differentially to the SH3 domains of certain proteins of signal transduction pathways. Binds to phosphatidylinositols; linking the hemopoietic tyrosine kinase fes to the cytoplasmic membrane in a phosphorylation dependent mechanism. The chain is SH3 domain-binding protein 2 (Sh3bp2) from Mus musculus (Mouse).